The sequence spans 693 residues: Putative tyrosinase-like protein tyr-3 (693 aa).

A signal peptide spans 1-18 (MIRYIILLVYFLIFEVNS). Cu cation contacts are provided by H142, H152, H161, H281, H285, and H308. ShKT domains follow at residues 472–506 (CFNENECCGPWSAKGECQKNPVYMNVWCKASCRQC), 516–550 (CSDRHTNCAMWSRSGECNKNPLWMSENCRSSCQKC), 591–625 (CYNEDQCCPIWAQRGQCRSNPGYMTCQCKVSCGVC), and 634–667 (CADYHYDCAAWARRGECLKNKWMPENCRRSCNTC). Disulfide bonds link C472/C506, C479/C499, C488/C503, C516/C550, C523/C543, C532/C547, C591/C625, C598/C618, C607/C622, C634/C667, C641/C660, and C650/C664.

The protein belongs to the tyrosinase family. The cofactor is Cu(2+).

The chain is Putative tyrosinase-like protein tyr-3 (tyr-3) from Caenorhabditis elegans.